The chain runs to 504 residues: Putative arrestin-related trafficking adapter SPBC839.02 (504 aa).

Residues 481–504 are disordered; the sequence is QAPPPKYDDIFQSGSSHDENHDDN.

The protein belongs to the ALY1 family.

Functionally, may regulate endocytosis in response to extracellular stimuli. This is Putative arrestin-related trafficking adapter SPBC839.02 from Schizosaccharomyces pombe (strain 972 / ATCC 24843) (Fission yeast).